Here is a 660-residue protein sequence, read N- to C-terminus: Acetyl-coenzyme A synthetase (660 aa).

CoA is bound by residues 197–200 (RGGK) and Thr-317. ATP-binding positions include 397 to 399 (GEP), 421 to 426 (DTFWQT), Asp-512, and Arg-528. A CoA-binding site is contributed by Ser-536. Residue Arg-539 coordinates ATP. The Mg(2+) site is built by Val-550 and Val-555. Lys-625 carries the post-translational modification N6-acetyllysine.

Belongs to the ATP-dependent AMP-binding enzyme family. Mg(2+) serves as cofactor. Post-translationally, acetylated. Deacetylation by the SIR2-homolog deacetylase activates the enzyme.

It catalyses the reaction acetate + ATP + CoA = acetyl-CoA + AMP + diphosphate. It functions in the pathway ketone degradation; acetoin degradation. Functionally, catalyzes the conversion of acetate into acetyl-CoA (AcCoA), an essential intermediate at the junction of anabolic and catabolic pathways. AcsA undergoes a two-step reaction. In the first half reaction, AcsA combines acetate with ATP to form acetyl-adenylate (AcAMP) intermediate. In the second half reaction, it can then transfer the acetyl group from AcAMP to the sulfhydryl group of CoA, forming the product AcCoA. Although acetate is the preferred substrate of AcsA, propionate is also used, but at a diminished rate compared with that of acetate. Fatty acids with more than three carbon atoms are usually not accepted as substrates by AcsA. This chain is Acetyl-coenzyme A synthetase, found in Cupriavidus necator (strain ATCC 17699 / DSM 428 / KCTC 22496 / NCIMB 10442 / H16 / Stanier 337) (Ralstonia eutropha).